A 112-amino-acid chain; its full sequence is uncharacterized protein (112 aa).

This is an uncharacterized protein from Dictyostelium discoideum (Social amoeba).